A 431-amino-acid chain; its full sequence is Hemagglutinin-esterase (431 aa).

Positions 1–21 are cleaved as a signal peptide; that stretch reads MARTDAMAPRTLLLVLSLGYA. The segment at 11–131 is esterase domain 1; sequence TLLLVLSLGY…DNNRWMGNKA (121 aa). Residues 22-399 are Virion surface-facing; that stretch reads FGFNEPLNVV…PVCMYDPLPV (378 aa). Ser44 serves as the catalytic Nucleophile. A disulfide bond links Cys48 and Cys69. Asn53, Asn93, Asn151, Asn157, Asn199, Asn244, Asn248, and Asn309 each carry an N-linked (GlcNAc...) asparagine; by host glycan. The cysteines at positions 117 and 166 are disulfide-linked. The interval 132 to 274 is receptor binding; sequence RFYTQLYQKM…GNYISISNEL (143 aa). Intrachain disulfides connect Cys205–Cys284 and Cys213–Cys257. An esterase domain 2 region spans residues 275–387; sequence LLTVPSKAIC…HCPTAANIVF (113 aa). A disulfide bridge links Cys315 with Cys320. The N-linked (GlcNAc...) asparagine; by host glycan is linked to Asn324. Residues Asp334 and His337 each act as charge relay system in the active site. N-linked (GlcNAc...) asparagine; by host glycosylation is found at Asn352 and Asn366. Cys355 and Cys379 are joined by a disulfide. A helical membrane pass occupies residues 400–420; it reads ILLGVLLGIAVLIIVFLMFYF. Topologically, residues 421–431 are intravirion; it reads MTDSGVRLHEA.

Belongs to the influenza type C/coronaviruses hemagglutinin-esterase family. In terms of assembly, homodimer; disulfide-linked. Forms a complex with the M protein in the pre-Golgi. Associates then with S-M complex to form a ternary complex S-M-HE. Post-translationally, N-glycosylated in the host RER.

It is found in the virion membrane. The protein localises to the host cell membrane. The enzyme catalyses N-acetyl-9-O-acetylneuraminate + H2O = N-acetylneuraminate + acetate + H(+). It catalyses the reaction N-acetyl-4-O-acetylneuraminate + H2O = N-acetylneuraminate + acetate + H(+). Functionally, structural protein that makes short spikes at the surface of the virus. Contains receptor binding and receptor-destroying activities. Mediates de-O-acetylation of N-acetyl-4-O-acetylneuraminic acid, which is probably the receptor determinant recognized by the virus on the surface of erythrocytes and susceptible cells. This receptor-destroying activity is important for virus release as it probably helps preventing self-aggregation and ensures the efficient spread of the progeny virus from cell to cell. May serve as a secondary viral attachment protein for initiating infection, the spike protein being the major one. May become a target for both the humoral and the cellular branches of the immune system. This Murine coronavirus (strain DVIM) (MHV-DVIM) protein is Hemagglutinin-esterase.